A 937-amino-acid polypeptide reads, in one-letter code: Isoleucine--tRNA ligase (937 aa).

The short motif at 58–68 is the 'HIGH' region element; that stretch reads PYANGDIHIGH. Residue glutamate 561 participates in L-isoleucyl-5'-AMP binding. The short motif at 602–606 is the 'KMSKS' region element; that stretch reads KMSKS. An ATP-binding site is contributed by lysine 605. Zn(2+)-binding residues include cysteine 900, cysteine 903, cysteine 920, and cysteine 923.

This sequence belongs to the class-I aminoacyl-tRNA synthetase family. IleS type 1 subfamily. Monomer. Zn(2+) is required as a cofactor.

Its subcellular location is the cytoplasm. It catalyses the reaction tRNA(Ile) + L-isoleucine + ATP = L-isoleucyl-tRNA(Ile) + AMP + diphosphate. Its function is as follows. Catalyzes the attachment of isoleucine to tRNA(Ile). As IleRS can inadvertently accommodate and process structurally similar amino acids such as valine, to avoid such errors it has two additional distinct tRNA(Ile)-dependent editing activities. One activity is designated as 'pretransfer' editing and involves the hydrolysis of activated Val-AMP. The other activity is designated 'posttransfer' editing and involves deacylation of mischarged Val-tRNA(Ile). The protein is Isoleucine--tRNA ligase of Alcanivorax borkumensis (strain ATCC 700651 / DSM 11573 / NCIMB 13689 / SK2).